The chain runs to 931 residues: Netrin receptor UNC5C (931 aa).

A signal peptide spans 1 to 40 (MRKGLRATAARCGLGLGYLLQMLVLPALALLSASGTGSAA). The Extracellular segment spans residues 41–380 (QDDEFFHELP…APDSDDVALY (340 aa)). The region spanning 62 to 159 (PHFLIEPEEA…AGTTKSRKAY (98 aa)) is the Ig-like domain. Disulfide bonds link Cys-83–Cys-144, Cys-95–Cys-142, Cys-188–Cys-239, Cys-272–Cys-309, Cys-276–Cys-313, Cys-287–Cys-299, Cys-328–Cys-362, Cys-332–Cys-367, and Cys-340–Cys-352. In terms of domain architecture, Ig-like C2-type spans 161–256 (RIAYLRKTFE…KRKSTTATVI (96 aa)). A glycan (N-linked (GlcNAc...) asparagine) is linked at Asn-236. TSP type-1 domains lie at 260 to 314 (NGGW…TLCP) and 316 to 368 (DGRW…GLCM). Asn-361 carries N-linked (GlcNAc...) asparagine glycosylation. A helical transmembrane segment spans residues 381 to 401 (VGIVIAVTVCLAITVVVALFV). Residues 402-931 (YRKNHRDFES…VVSLAAEGQY (530 aa)) are Cytoplasmic-facing. A required for netrin-mediated axon repulsion of neuronal growth cones region spans residues 402–931 (YRKNHRDFES…VVSLAAEGQY (530 aa)). Ser-502 carries the post-translational modification Phosphoserine. A ZU5 domain is found at 530 to 673 (CTAFGTFNSL…LSTYALVGQS (144 aa)). The residue at position 568 (Tyr-568) is a Phosphotyrosine. Residues 694-712 (SLEYSIRVYCLDDTQDALK) form an interaction with DCC region. Residues 850 to 929 (QKLCSSLDAP…ETVVSLAAEG (80 aa)) form the Death domain.

The protein belongs to the unc-5 family. As to quaternary structure, interacts with DCC (via cytoplasmic domain). Interacts (tyrosine phosphorylated form) with PTPN11. Interacts (via extracellular domain) with FLRT3 (via extracellular domain). Interacts (via Ig-like C2-type domain) with DSCAM (via extracellular domain). Interacts (via death domain) with DAPK1. Interacts (via cytoplasmic domain) with TUBB3; this interaction is decreased by NTN1/Netrin-1. Phosphorylated on different cytoplasmic tyrosine residues. Phosphorylation of Tyr-568 leads to an interaction with PTPN11 phosphatase, suggesting that its activity is regulated by phosphorylation/dephosphorylation. Tyrosine phosphorylation is netrin-dependent. In terms of processing, proteolytically cleaved by caspases during apoptosis. The cleavage does not take place when the receptor is associated with netrin ligand. Its cleavage by caspases is required to induce apoptosis. Expressed in cortical and cerebellar neurons, including cells of the external and internal granular layer and of the Purkinje cell layer (at protein level). Mainly expressed in regions of differentiating neurons. Highly expressed in brain and lung. Expressed in the cerebellum and the neurons of the hippocampus, with enrichment in neurons of the CA3 hippocampal pyramidal layer. Weakly expressed in testis, ovary, spleen, thymus and bladder. Expressed at very low level in kidney, intestine and salivary gland.

Its subcellular location is the cell membrane. It is found in the cell surface. The protein resides in the synapse. The protein localises to the synaptosome. It localises to the cell projection. Its subcellular location is the dendrite. It is found in the axon. The protein resides in the growth cone. The protein localises to the lamellipodium. It localises to the filopodium. Functionally, receptor for netrin required for axon guidance. Mediates axon repulsion of neuronal growth cones in the developing nervous system upon ligand binding. NTN1/Netrin-1 binding might cause dissociation of UNC5C from polymerized TUBB3 in microtubules and thereby lead to increased microtubule dynamics and axon repulsion. Axon repulsion in growth cones may also be caused by its association with DCC that may trigger signaling for repulsion. Might also collaborate with DSCAM in NTN1-mediated axon repulsion independently of DCC. Also involved in corticospinal tract axon guidance independently of DCC. Involved in dorsal root ganglion axon projection towards the spinal cord. It also acts as a dependence receptor required for apoptosis induction when not associated with netrin ligand. The sequence is that of Netrin receptor UNC5C (Unc5c) from Mus musculus (Mouse).